The following is a 229-amino-acid chain: Putative germin-like protein 12-4 (229 aa).

A signal peptide spans 1–22; the sequence is MAASNFFLLTAFIALVATQAMA. Residues C32 and C47 are joined by a disulfide bond. In terms of domain architecture, Cupin type-1 spans 62-217; the sequence is ANLDKPMDTT…AFQVDKKAMD (156 aa). N78 carries N-linked (GlcNAc...) asparagine glycosylation. Mn(2+) is bound by residues H111, H113, E118, and H162.

It belongs to the germin family. Oligomer (believed to be a pentamer but probably hexamer).

It localises to the secreted. The protein localises to the extracellular space. It is found in the apoplast. Functionally, may play a role in plant defense. Probably has no oxalate oxidase activity even if the active site is conserved. The sequence is that of Putative germin-like protein 12-4 from Oryza sativa subsp. japonica (Rice).